A 708-amino-acid polypeptide reads, in one-letter code: Serine/threonine-protein kinase Nek5 (708 aa).

In terms of domain architecture, Protein kinase spans 4–259 (YDVIKAIGQG…INSILKRPFL (256 aa)). Residues 10–18 (IGQGAFGKA) and Lys33 contribute to the ATP site. Asp128 acts as the Proton acceptor in catalysis. Disordered regions lie at residues 376-403 (SYHP…PSQW) and 423-454 (KQLG…FQEL). Residues 440-454 (QELRSNGEEPRFQEL) show a composition bias toward basic and acidic residues.

The protein belongs to the protein kinase superfamily. NEK Ser/Thr protein kinase family. NIMA subfamily. Requires Mg(2+) as cofactor.

The protein resides in the cell projection. It localises to the cilium. The protein localises to the flagellum. It catalyses the reaction L-seryl-[protein] + ATP = O-phospho-L-seryl-[protein] + ADP + H(+). The catalysed reaction is L-threonyl-[protein] + ATP = O-phospho-L-threonyl-[protein] + ADP + H(+). In Homo sapiens (Human), this protein is Serine/threonine-protein kinase Nek5 (NEK5).